The sequence spans 184 residues: ATP synthase subunit b, chloroplastic (184 aa).

The helical transmembrane segment at 27-49 (LATNPINLSVVFGVLIFFGKGVL) threads the bilayer.

This sequence belongs to the ATPase B chain family. In terms of assembly, F-type ATPases have 2 components, F(1) - the catalytic core - and F(0) - the membrane proton channel. F(1) has five subunits: alpha(3), beta(3), gamma(1), delta(1), epsilon(1). F(0) has four main subunits: a(1), b(1), b'(1) and c(10-14). The alpha and beta chains form an alternating ring which encloses part of the gamma chain. F(1) is attached to F(0) by a central stalk formed by the gamma and epsilon chains, while a peripheral stalk is formed by the delta, b and b' chains.

The protein localises to the plastid. It is found in the chloroplast thylakoid membrane. F(1)F(0) ATP synthase produces ATP from ADP in the presence of a proton or sodium gradient. F-type ATPases consist of two structural domains, F(1) containing the extramembraneous catalytic core and F(0) containing the membrane proton channel, linked together by a central stalk and a peripheral stalk. During catalysis, ATP synthesis in the catalytic domain of F(1) is coupled via a rotary mechanism of the central stalk subunits to proton translocation. In terms of biological role, component of the F(0) channel, it forms part of the peripheral stalk, linking F(1) to F(0). The sequence is that of ATP synthase subunit b, chloroplastic from Lobularia maritima (Sweet alyssum).